Consider the following 213-residue polypeptide: MSMIEEKIYKGTTTVGLVCKDGVVMATEKRATMGNFIASKAAKKIYQIADRMAMTTAGSVGDAQFLARIIKIEANLYEIRRERKPTVRAIATLTSNLLNSYRYFPYLVQLLIGGIDSEGKSIYSIDPIGGAIEEKDIVATGSGSLTAYGVLEDRFTPEIGVDEAVELAVRAIYSAMKRDSASGDGIDVVKITEDEFYQYSPEEVEQILAKFRK.

The propeptide at 1–11 (MSMIEEKIYKG) is removed in mature form; by autocatalysis. The active-site Nucleophile is the threonine 12.

Belongs to the peptidase T1B family. As to quaternary structure, the 20S proteasome core is composed of 14 alpha and 14 beta subunits that assemble into four stacked heptameric rings, resulting in a barrel-shaped structure. The two inner rings, each composed of seven catalytic beta subunits, are sandwiched by two outer rings, each composed of seven alpha subunits. The catalytic chamber with the active sites is on the inside of the barrel. Has probably a gated structure, the ends of the cylinder being occluded by the N-termini of the alpha-subunits. Is likely capped at one or both ends by the proteasome regulatory ATPase, PAN.

The protein resides in the cytoplasm. The enzyme catalyses Cleavage of peptide bonds with very broad specificity.. With respect to regulation, the formation of the proteasomal ATPase PAN-20S proteasome complex, via the docking of the C-termini of PAN into the intersubunit pockets in the alpha-rings, triggers opening of the gate for substrate entry. Interconversion between the open-gate and close-gate conformations leads to a dynamic regulation of the 20S proteasome proteolysis activity. Functionally, component of the proteasome core, a large protease complex with broad specificity involved in protein degradation. This chain is Proteasome subunit beta, found in Archaeoglobus fulgidus (strain ATCC 49558 / DSM 4304 / JCM 9628 / NBRC 100126 / VC-16).